We begin with the raw amino-acid sequence, 483 residues long: Cysteine proteinase 1, mitochondrial (483 aa).

Residues 1–30 constitute a mitochondrion transit peptide; it reads MLPTSVSWSLYLKTFRSHLLRAPQIVLKRM. Residues cysteine 102, histidine 398, and asparagine 421 contribute to the active site. Lysine 483 is a propeptide (removed in mature form; by autocatalysis).

Belongs to the peptidase C1 family. Homohexamer. Binds to nucleic acids. Binds single-stranded DNA and RNA with higher affinity than double-stranded DNA. The N-terminus of isoform Cytoplasmic is blocked.

It localises to the mitochondrion. The protein localises to the cytoplasm. The catalysed reaction is Inactivates bleomycin B2 (a cytotoxic glycometallopeptide) by hydrolysis of a carboxyamide bond of beta-aminoalanine, but also shows general aminopeptidase activity. The specificity varies somewhat with source, but amino acid arylamides of Met, Leu and Ala are preferred.. Its activity is regulated as follows. Inhibited by E64, a specific inhibitor of cysteine proteases, N-ethylmaleimide, iodacetamide, and mercury and zinc ions. In terms of biological role, the normal physiological role of the enzyme is unknown, but it is not essential for the viability of yeast cells. Has aminopeptidase activity, shortening substrate peptides sequentially by 1 amino acid. Has bleomycin hydrolase activity, which can protect the cell from the toxic effects of bleomycin. Has homocysteine-thiolactonase activity, protecting the cell against homocysteine toxicity. Acts as a repressor in the GAL4 regulatory system, but this does not require either the peptidase or nucleic acid-binding activities. This is Cysteine proteinase 1, mitochondrial (LAP3) from Saccharomyces cerevisiae (strain YJM789) (Baker's yeast).